A 232-amino-acid polypeptide reads, in one-letter code: MSMPQAILTDIEGTTSSLSFVKEVLFPYARRALPDFVREHREHPDVMPWLDQVANETGTAFSEEALVATLQTWIDTDSKHTALKALQGMIWASGYQNGDFTTHLYPDAVQRLRAWHAANVPLYVYSSGSVPAQQLFFRHSHAGDLSGLFSGWFDTKIGGKRESTSYQRIAQHIGIAPAGIVFLSDVIEELNAAAQIGLNTVLIDRRDDYPTPRHLKDTDRHLHLDSFAQLPF.

Belongs to the HAD-like hydrolase superfamily. MasA/MtnC family. Monomer. Mg(2+) serves as cofactor.

It carries out the reaction 5-methylsulfanyl-2,3-dioxopentyl phosphate + H2O = 1,2-dihydroxy-5-(methylsulfanyl)pent-1-en-3-one + phosphate. It functions in the pathway amino-acid biosynthesis; L-methionine biosynthesis via salvage pathway; L-methionine from S-methyl-5-thio-alpha-D-ribose 1-phosphate: step 3/6. The protein operates within amino-acid biosynthesis; L-methionine biosynthesis via salvage pathway; L-methionine from S-methyl-5-thio-alpha-D-ribose 1-phosphate: step 4/6. In terms of biological role, bifunctional enzyme that catalyzes the enolization of 2,3-diketo-5-methylthiopentyl-1-phosphate (DK-MTP-1-P) into the intermediate 2-hydroxy-3-keto-5-methylthiopentenyl-1-phosphate (HK-MTPenyl-1-P), which is then dephosphorylated to form the acireductone 1,2-dihydroxy-3-keto-5-methylthiopentene (DHK-MTPene). In Xylella fastidiosa (strain M12), this protein is Enolase-phosphatase E1.